Reading from the N-terminus, the 568-residue chain is Sesquiterpene synthase 14 (568 aa).

Aspartate 319, aspartate 323, aspartate 463, and glutamate 471 together coordinate Mg(2+). Residues 319-323 (DDLYD) carry the DDXXD motif motif.

It belongs to the terpene synthase family. Tpsa subfamily. Requires Mg(2+) as cofactor. Mn(2+) is required as a cofactor. Mostly expressed in roots, to a lower extent in flowers and, at low levels, in fruits.

The catalysed reaction is (2Z,6Z)-farnesyl diphosphate = (E)-alpha-bisabolene + diphosphate. It catalyses the reaction (2Z,6Z)-farnesyl diphosphate = beta-bisabolene + diphosphate. The enzyme catalyses (2E,6E)-farnesyl diphosphate = beta-bisabolene + diphosphate. It carries out the reaction (2E,6E)-farnesyl diphosphate = (Z)-gamma-bisabolene + diphosphate. The catalysed reaction is (2E,6E)-farnesyl diphosphate = (E)-gamma-bisabolene + diphosphate. It catalyses the reaction (2Z,6Z)-farnesyl diphosphate = (E)-gamma-bisabolene + diphosphate. Its pathway is secondary metabolite biosynthesis; terpenoid biosynthesis. Sesquiterpene synthase involved in the biosynthesis of volatile compounds. Mediates the conversion of (2E,6E)-farnesyl diphosphate ((EE)-FPP) into beta-bisabolene, and of (2Z,6Z)-farnesyl diphosphate ((ZZ)-FPP) into alpha-bisabolene, but also smaller amounts of (Z)-gamma-bisabolene, (E)-gamma-bisabolene and nerolidol. The chain is Sesquiterpene synthase 14 from Solanum lycopersicum (Tomato).